Consider the following 322-residue polypeptide: Breast cancer metastasis-suppressor 1-like protein (322 aa).

Residues 1-16 (MPVHSREKKESNHNDM) are compositionally biased toward basic and acidic residues. The tract at residues 1–56 (MPVHSREKKESNHNDMEVDYPENEGTSSEEDDSDSSSGSEEGDSSEMDDEDCERRR) is disordered. Positions 17–51 (EVDYPENEGTSSEEDDSDSSSGSEEGDSSEMDDED) are enriched in acidic residues. Coiled coils occupy residues 50–82 (EDCE…KERL) and 147–178 (EKLL…ITSE).

The protein belongs to the BRMS1 family.

The protein resides in the nucleus. Involved in the histone deacetylase (HDAC1)-dependent transcriptional repression activity. The protein is Breast cancer metastasis-suppressor 1-like protein (brms1l) of Xenopus tropicalis (Western clawed frog).